Here is a 1104-residue protein sequence, read N- to C-terminus: A disintegrin and metalloproteinase with thrombospondin motifs 10 (1104 aa).

An N-terminal signal peptide occupies residues 1-25; that stretch reads MASACQILRWALALGLGLTFKVTHA. Residues 26-233 constitute a propeptide that is removed on maturation; the sequence is FRSQDELLSS…SERGQLGLKR (208 aa). 2 N-linked (GlcNAc...) asparagine glycosylation sites follow: Asn-90 and Asn-222. A Peptidase M12B domain is found at 239–457; sequence RYVETLVVAD…GLGLCLNNRP (219 aa). 11 disulfides stabilise this stretch: Cys-315–Cys-376, Cys-351–Cys-358, Cys-370–Cys-452, Cys-409–Cys-436, Cys-479–Cys-501, Cys-490–Cys-508, Cys-496–Cys-531, Cys-521–Cys-536, Cys-559–Cys-596, Cys-563–Cys-601, and Cys-574–Cys-586. Zn(2+) is bound at residue His-392. Glu-393 is a catalytic residue. Zn(2+) contacts are provided by His-396 and His-402. A Disintegrin domain is found at 460 to 546; sequence QDFVYPTVAP…VPFGSRPEGV (87 aa). Residues 547–602 enclose the TSP type-1 1 domain; sequence DGAWGPWTPWGDCSRSCGGGVSSSSRHCDSPRPTIGGKYCLGERRRHRSCNTNDCP. The tract at residues 706–818 is spacer; the sequence is ETIEGVFSPA…PALHYRFNAP (113 aa). 2 N-linked (GlcNAc...) asparagine glycosylation sites follow: Asn-740 and Asn-795. TSP type-1 domains follow at residues 825 to 885, 888 to 943, 944 to 1003, and 1004 to 1058; these read PPYS…EPCP, WVVG…QGPM, CPPE…RRCP, and PARW…AKCD. 3 disulfides stabilise this stretch: Cys-837/Cys-879, Cys-841/Cys-884, and Cys-852/Cys-866. N-linked (GlcNAc...) asparagine glycosylation occurs at Asn-892. Residues 1066 to 1104 enclose the PLAC domain; the sequence is GPEECKDVNKVAYCPLVLKFQFCSRAYFRQMCCKTCQGR.

In terms of assembly, interacts with FBN1; this interaction promotes microfibrils assembly. It depends on Zn(2+) as a cofactor. Glycosylated. Can be O-fucosylated by POFUT2 on a serine or a threonine residue found within the consensus sequence C1-X(2)-(S/T)-C2-G of the TSP type-1 repeat domains where C1 and C2 are the first and second cysteine residue of the repeat, respectively. Fucosylated repeats can then be further glycosylated by the addition of a beta-1,3-glucose residue by the glucosyltransferase, B3GALTL. Fucosylation mediates the efficient secretion of ADAMTS family members. Can also be C-glycosylated with one or two mannose molecules on tryptophan residues within the consensus sequence W-X-X-W of the TPRs, and N-glycosylated. These other glycosylations can also facilitate secretion. As to expression, widely expressed in adult tissues.

Its subcellular location is the secreted. It is found in the extracellular space. It localises to the extracellular matrix. Functionally, metalloprotease that participate in microfibrils assembly. Microfibrils are extracellular matrix components occurring independently or along with elastin in the formation of elastic tissues. The chain is A disintegrin and metalloproteinase with thrombospondin motifs 10 (Adamts10) from Mus musculus (Mouse).